Reading from the N-terminus, the 1161-residue chain is BMP-2-inducible protein kinase (1161 aa).

The tract at residues 1–20 (MKKFSRMPKSEGGSGGGAAG) is disordered. The residue at position 14 (serine 14) is a Phosphoserine. One can recognise a Protein kinase domain in the interval 51–316 (VTLEESLAEG…DIFQVSYFAF (266 aa)). Residues 57 to 65 (LAEGGFSTV) and lysine 79 contribute to the ATP site. Catalysis depends on aspartate 180, which acts as the Proton acceptor. Disordered stretches follow at residues 358 to 439 (TDTI…RVLQ), 453 to 495 (LQHR…HHHL), 610 to 630 (TNQK…FGED), and 655 to 832 (ERAS…TQDL). The segment covering 361 to 394 (IGPTETSIAPRQRPKANSATTATPSVLTIQSSAT) has biased composition (polar residues). Composition is skewed to low complexity over residues 422–439 (LLGQ…RVLQ) and 460–485 (QQQQ…QQQQ). A compositionally biased stretch (polar residues) spans 610–619 (TNQKNISNPP). A Phosphoserine modification is found at serine 689. Composition is skewed to polar residues over residues 697-718 (SSIN…SPAS) and 726-735 (KTSVQGQVQK). A Phosphoserine modification is found at serine 742. Residues 755–779 (EEEEQDDEEVLQGEQGDFNDDDTEP) are compositionally biased toward acidic residues. Positions 798–813 (EKHSSDSDYEQAKAKY) are enriched in basic and acidic residues. A phosphoserine mark is found at serine 817 and serine 818. The residue at position 834 (threonine 834) is a Phosphothreonine. Serine 928 is modified (phosphoserine). Residues 965–1035 (SQQQKVKQRS…RRDSQSSNEF (71 aa)) are disordered. Residues 970 to 984 (VKQRSLQKLSSRQRR) show a composition bias toward basic residues. A compositionally biased stretch (low complexity) spans 1000 to 1011 (TPTSTKKTLKPT). Phosphoserine occurs at positions 1029, 1031, 1032, 1039, 1041, 1076, 1107, and 1111. Residues 1137-1146 (TPHQSQQSQP) are compositionally biased toward polar residues. The tract at residues 1137–1161 (TPHQSQQSQPVELDPFGAAPFPSKQ) is disordered.

The protein belongs to the protein kinase superfamily. Ser/Thr protein kinase family. In terms of processing, autophosphorylated.

It localises to the nucleus. It carries out the reaction L-seryl-[protein] + ATP = O-phospho-L-seryl-[protein] + ADP + H(+). It catalyses the reaction L-threonyl-[protein] + ATP = O-phospho-L-threonyl-[protein] + ADP + H(+). May be involved in osteoblast differentiation. The protein is BMP-2-inducible protein kinase (BMP2K) of Homo sapiens (Human).